Consider the following 280-residue polypeptide: Nuclear egress protein 1 (280 aa).

The segment at 86-203 (CLTLSPYGHS…YIIFTSLTLH (118 aa)) adopts a CCCH-type zinc-finger fold.

This sequence belongs to the herpesviridae NEC1 protein family. As to quaternary structure, forms a heterohexameric complex with NEC2. Interacts with capsid vertex specific component 2/CVC2; this interaction directs the capsid to the host inner nuclear membrane to initiate budding. Post-translationally, phosphorylated at serine residues in the N-terminus. This phosphorylation regulates the localization within the inner nuclear membrane.

It is found in the host nucleus inner membrane. Plays an essential role in virion nuclear egress, the first step of virion release from infected cell. Within the host nucleus, NEC1 interacts with the newly formed capsid through the vertexes and directs it to the inner nuclear membrane by associating with NEC2. Induces the budding of the capsid at the inner nuclear membrane as well as its envelopment into the perinuclear space. There, the NEC1/NEC2 complex promotes the fusion of the enveloped capsid with the outer nuclear membrane and the subsequent release of the viral capsid into the cytoplasm where it will reach the secondary budding sites in the host Golgi or trans-Golgi network. This is Nuclear egress protein 1 from Alcelaphine herpesvirus 1 (strain C500) (AlHV-1).